Consider the following 61-residue polypeptide: Chromatin protein Cren7 (61 aa).

It belongs to the Cren7 family. As to quaternary structure, monomer. Methylated at multiple sites, to varying extents.

The protein resides in the chromosome. It is found in the cytoplasm. Its function is as follows. A chromatin protein, binds double-stranded DNA without sequence specificity. Constrains negative DNA supercoils. In Caldivirga maquilingensis (strain ATCC 700844 / DSM 13496 / JCM 10307 / IC-167), this protein is Chromatin protein Cren7.